The primary structure comprises 246 residues: Orotidine 5'-phosphate decarboxylase (246 aa).

Substrate contacts are provided by residues Asp-22, Lys-44, 71 to 80 (DLKFHDIPNT), Thr-131, Arg-192, Gln-201, Gly-221, and Arg-222. The active-site Proton donor is the Lys-73.

It belongs to the OMP decarboxylase family. Type 1 subfamily. Homodimer.

The enzyme catalyses orotidine 5'-phosphate + H(+) = UMP + CO2. The protein operates within pyrimidine metabolism; UMP biosynthesis via de novo pathway; UMP from orotate: step 2/2. In terms of biological role, catalyzes the decarboxylation of orotidine 5'-monophosphate (OMP) to uridine 5'-monophosphate (UMP). The chain is Orotidine 5'-phosphate decarboxylase from Enterobacter sp. (strain 638).